A 1007-amino-acid chain; its full sequence is uncharacterized protein (1007 aa).

An N-terminal signal peptide occupies residues 1–51; that stretch reads MTTPISNSPSSIPTVTVSTTTASSGSLGTSTVSSTTTSTSVAQTATTTSSA. Residues 1–96 show a composition bias toward low complexity; sequence MTTPISNSPS…SATANKTSSA (96 aa). Disordered stretches follow at residues 1–186, 200–224, 387–533, 543–562, 578–645, 655–674, and 712–757; these read MTTP…GNPI, TYTT…MSLP, NWGS…GPDI, TVYP…ANQN, ETII…GPDI, and DLED…GPDI. Residues 118–163 show a composition bias toward polar residues; it reads DGEVSSNYDDVDTPTNSSDSTVDSDYQDVETQYKTISNNGENTYET. The segment covering 167–176 has biased composition (basic and acidic residues); sequence HGEKNTHVQE. Polar residues-rich tracts occupy residues 177-186 and 200-210; these read SHASGTGNPI and TYTTSPRNENI. A compositionally biased stretch (low complexity) spans 423-442; that stretch reads VINVNVNVGGTNVNIGDTNV. A compositionally biased stretch (polar residues) spans 443–453; the sequence is SKGSGTPTSSQ. The span at 469 to 491 shows a compositional bias: low complexity; sequence IDTNNQTNGDINTNDNSNNVDGS. A compositionally biased stretch (polar residues) spans 507–523; that stretch reads DTESTNGNDSGKTTSTE. Positions 597–618 are enriched in acidic residues; that stretch reads ADADVEDTSDTDSGIGDDDGVS. A compositionally biased stretch (low complexity) spans 619-635; the sequence is DTESTNGNNSGKTTSTE. Positions 712 to 730 are enriched in acidic residues; it reads DLEDVSDADSGFGDDDGIS. A compositionally biased stretch (polar residues) spans 732–743; it reads TESTNGNDSGKN.

It belongs to the chlamydial CPn_0572/CT_456/TC_0741 family.

This is an uncharacterized protein from Chlamydia muridarum (strain MoPn / Nigg).